A 456-amino-acid polypeptide reads, in one-letter code: Glycerol-3-phosphate acyltransferase 4 (456 aa).

An N-terminal signal peptide occupies residues 1–37 (MFLLLPFDSLIVNLLGISLTVLFTLLLVFIIVPAIFG). 2 helical membrane-spanning segments follow: residues 156-176 (ISLR…CFLL) and 180-200 (IALA…VGYL). The N-linked (GlcNAc...) asparagine glycan is linked to asparagine 247. Positions 248 to 253 (HTSPID) match the HXXXXD motif motif. Residues asparagine 327, asparagine 328, and asparagine 362 are each glycosylated (N-linked (GlcNAc...) asparagine).

This sequence belongs to the 1-acyl-sn-glycerol-3-phosphate acyltransferase family. Ubiquitous. High levels in testis. Relatively high level of expression in skeletal muscle and heart. Relatively low level of expression in lung.

The protein localises to the endoplasmic reticulum membrane. The catalysed reaction is sn-glycerol 3-phosphate + an acyl-CoA = a 1-acyl-sn-glycero-3-phosphate + CoA. The enzyme catalyses dodecanoyl-CoA + sn-glycerol 3-phosphate = 1-dodecanoyl-sn-glycerol 3-phosphate + CoA. It catalyses the reaction sn-glycerol 3-phosphate + hexadecanoyl-CoA = 1-hexadecanoyl-sn-glycero-3-phosphate + CoA. It carries out the reaction sn-glycerol 3-phosphate + octadecanoyl-CoA = 1-octadecanoyl-sn-glycero-3-phosphate + CoA. The catalysed reaction is sn-glycerol 3-phosphate + (9Z)-octadecenoyl-CoA = 1-(9Z-octadecenoyl)-sn-glycero-3-phosphate + CoA. The enzyme catalyses (9Z,12Z)-octadecadienoyl-CoA + sn-glycerol 3-phosphate = 1-(9Z,12Z)-octadecadienoyl-sn-glycero-3-phosphate + CoA. It functions in the pathway phospholipid metabolism; CDP-diacylglycerol biosynthesis; CDP-diacylglycerol from sn-glycerol 3-phosphate: step 1/3. Inhibited by N-ethylmaleimide (NEM). In terms of biological role, converts glycerol-3-phosphate to 1-acyl-sn-glycerol-3-phosphate (lysophosphatidic acid or LPA) by incorporating an acyl moiety at the sn-1 position of the glycerol backbone. Active against both saturated and unsaturated long-chain fatty acyl-CoAs. Protects cells against lipotoxicity. This is Glycerol-3-phosphate acyltransferase 4 from Homo sapiens (Human).